Reading from the N-terminus, the 134-residue chain is Complexin-2 (134 aa).

Residues 1-114 (MDFVMKQALG…CGDEDEEDEE (114 aa)) are disordered. A compositionally biased stretch (basic and acidic residues) spans 15-85 (DMGKMLGGDE…EEKEAEEKAA (71 aa)). A coiled-coil region spans residues 29–84 (DAQKKEEERQEALRQQEDERKQKHIRMETEREKVRQQIRDKYGLKKKEEKEAEEKA).

This sequence belongs to the complexin/synaphin family. As to quaternary structure, binds to the SNARE core complex containing SNAP25, VAMP2 and STX1A. As to expression, nervous system. Present in electric organ (at protein level).

It localises to the cytoplasm. Its subcellular location is the cytosol. The protein resides in the presynapse. It is found in the nucleus. The protein localises to the perikaryon. In terms of biological role, positively regulates a late step in synaptic vesicle exocytosis. This Narke japonica (Japanese sleeper ray) protein is Complexin-2.